We begin with the raw amino-acid sequence, 402 residues long: Argininosuccinate synthase (402 aa).

Residues 9–17 (AYSGGLDTS) and Ala-36 contribute to the ATP site. Residues Tyr-87 and Ser-92 each coordinate L-citrulline. Gly-117 serves as a coordination point for ATP. L-aspartate-binding residues include Thr-119, Asn-123, and Asp-124. Asn-123 lines the L-citrulline pocket. Positions 127, 176, 185, 261, and 273 each coordinate L-citrulline.

This sequence belongs to the argininosuccinate synthase family. Type 1 subfamily. As to quaternary structure, homotetramer.

The protein localises to the cytoplasm. The enzyme catalyses L-citrulline + L-aspartate + ATP = 2-(N(omega)-L-arginino)succinate + AMP + diphosphate + H(+). It functions in the pathway amino-acid biosynthesis; L-arginine biosynthesis; L-arginine from L-ornithine and carbamoyl phosphate: step 2/3. The sequence is that of Argininosuccinate synthase from Deinococcus radiodurans (strain ATCC 13939 / DSM 20539 / JCM 16871 / CCUG 27074 / LMG 4051 / NBRC 15346 / NCIMB 9279 / VKM B-1422 / R1).